The primary structure comprises 584 residues: Arginine--tRNA ligase (584 aa).

The short motif at 126 to 136 (PNIAKEMHVGH) is the 'HIGH' region element.

Belongs to the class-I aminoacyl-tRNA synthetase family. Monomer.

Its subcellular location is the cytoplasm. The enzyme catalyses tRNA(Arg) + L-arginine + ATP = L-arginyl-tRNA(Arg) + AMP + diphosphate. This is Arginine--tRNA ligase (argS) from Synechocystis sp. (strain ATCC 27184 / PCC 6803 / Kazusa).